Consider the following 122-residue polypeptide: Large ribosomal subunit protein uL14 (122 aa).

Belongs to the universal ribosomal protein uL14 family. In terms of assembly, part of the 50S ribosomal subunit. Forms a cluster with proteins L3 and L19. In the 70S ribosome, L14 and L19 interact and together make contacts with the 16S rRNA in bridges B5 and B8.

Its function is as follows. Binds to 23S rRNA. Forms part of two intersubunit bridges in the 70S ribosome. This is Large ribosomal subunit protein uL14 from Sulfurihydrogenibium sp. (strain YO3AOP1).